Reading from the N-terminus, the 130-residue chain is Cystatin (130 aa).

A signal peptide spans 1 to 19 (MEWKIVVPLFAVAFTVANA). A Secondary area of contact motif is present at residues 67–71 (QVVSG). 2 disulfides stabilise this stretch: C85–C94 and C108–C128.

The protein belongs to the cystatin family.

The protein localises to the secreted. Functionally, cysteine proteinase inhibitor. The protein is Cystatin of Oncorhynchus mykiss (Rainbow trout).